Reading from the N-terminus, the 628-residue chain is (+)-alpha pinene synthase 1, chloroplastic (628 aa).

Positions 379, 383, and 531 each coordinate Mg(2+). The DDXXD motif signature appears at 379–383 (DDIYD).

It belongs to the terpene synthase family. Tpsd subfamily. Mg(2+) is required as a cofactor. The cofactor is Mn(2+).

Its subcellular location is the plastid. The protein resides in the chloroplast. It catalyses the reaction (2E)-geranyl diphosphate = (1R,5R)-alpha-pinene + diphosphate. Its pathway is terpene metabolism; oleoresin biosynthesis. The protein operates within secondary metabolite biosynthesis; terpenoid biosynthesis. Functionally, monoterpene synthase (TPS) involved in the biosynthesis of monoterpene natural products included in conifer oleoresin secretions and volatile emissions; these compounds contribute to biotic and abiotic stress defense against herbivores and pathogens. Catalyzes the conversion of (2E)-geranyl diphosphate (GPP) to (+)-alpha-pinene. In Pinus contorta (Shore pine), this protein is (+)-alpha pinene synthase 1, chloroplastic.